Consider the following 470-residue polypeptide: Serine hydroxymethyltransferase, cytosolic (470 aa).

The span at 1–11 (MSAYALSQSHR) shows a compositional bias: polar residues. The disordered stretch occupies residues 1-23 (MSAYALSQSHRQLTEGHLKDTDP). Position 2 is an N-acetylserine (Ser-2). A compositionally biased stretch (basic and acidic residues) spans 12-23 (QLTEGHLKDTDP). The residue at position 249 (Lys-249) is an N6-(pyridoxal phosphate)lysine.

It belongs to the SHMT family. In terms of assembly, homotetramer. Pyridoxal 5'-phosphate is required as a cofactor.

The protein resides in the cytoplasm. It catalyses the reaction (6R)-5,10-methylene-5,6,7,8-tetrahydrofolate + glycine + H2O = (6S)-5,6,7,8-tetrahydrofolate + L-serine. Its pathway is one-carbon metabolism; tetrahydrofolate interconversion. In terms of biological role, interconversion of serine and glycine. This Candida albicans (strain SC5314 / ATCC MYA-2876) (Yeast) protein is Serine hydroxymethyltransferase, cytosolic (SHM2).